The sequence spans 414 residues: MTDTPGLLGTPLAWTPPARPAGPQMERAGNGSQGPGPLFLTSPLARGVSGVFVWAALVLTGHQIYLHLRSYTVPHEQRYIIRLLFIVPVYAFDSWLSLLLLGGHQHYIYFDSVRDCYEAFVIYSFLSLCFQYLGGESAIMAEIRGKPVRTSCFHGTCCLRGMTYSIGFLRFCKQATLQFCIVKPIMALVTIVLQAFGKYHDGDFNVRSGYLYITLVYNASVSLALYALFLFYSATRELLQPFEPVLKFLTIKAVIFLSFWQGLLLAILERCGVIPEVQVIDGSTVGAGTVAAGYQNFIICIEMLFASIALRYAFTCQVYSEKTESSPAPSAPMQSISSGLKETMSPQDIVQDAIHNFSPAYQKYTQQATQEAPRPGQGSVPSPRTPTHSPDGGPGGGRKGRNVEKRMLIPAEEL.

Positions 1–32 are disordered; it reads MTDTPGLLGTPLAWTPPARPAGPQMERAGNGS. 7 helical membrane passes run 48–68, 83–103, 120–140, 177–197, 211–231, 248–268, and 290–310; these read VSGVFVWAALVLTGHQIYLHL, LLFIVPVYAFDSWLSLLLLGG, FVIYSFLSLCFQYLGGESAIM, LQFCIVKPIMALVTIVLQAFG, LYITLVYNASVSLALYALFLF, FLTIKAVIFLSFWQGLLLAIL, and VAAGYQNFIICIEMLFASIAL. Disordered regions lie at residues 323 to 342 and 364 to 414; these read TESSPAPSAPMQSISSGLKE and YTQQ…AEEL. Polar residues predominate over residues 379–388; sequence SVPSPRTPTH.

This sequence belongs to the TMEM184 family. In terms of tissue distribution, expressed in vascular cells (at protein level).

It localises to the cell membrane. Its subcellular location is the cytoplasm. The protein localises to the perinuclear region. It is found in the cytoplasmic vesicle membrane. The protein resides in the early endosome membrane. It localises to the endosome. Its subcellular location is the cytoplasmic vesicle. The protein localises to the secretory vesicle membrane. Acts as a heparin receptor in vascular cells. May be involved in vesicle transport in exocrine cells and Sertoli cells. The sequence is that of Transmembrane protein 184A (TMEM184A) from Bos taurus (Bovine).